Consider the following 300-residue polypeptide: Transcription initiation factor IIB 1 (300 aa).

A TFIIB-type zinc finger spans residues 3–34; it reads GKRVCPVCGSTEFIYDPSRGEIVCKVCGYVIE. Cys7, Cys10, Cys26, and Cys29 together coordinate Zn(2+). 2 tandem repeats follow at residues 114 to 197 and 210 to 291.

It belongs to the TFIIB family.

Stabilizes TBP binding to an archaeal box-A promoter. Also responsible for recruiting RNA polymerase II to the pre-initiation complex (DNA-TBP-TFIIB). The protein is Transcription initiation factor IIB 1 of Thermococcus kodakarensis (strain ATCC BAA-918 / JCM 12380 / KOD1) (Pyrococcus kodakaraensis (strain KOD1)).